The chain runs to 250 residues: MSHNFHVIIPARYHSSRFPGKLLQEINGITVIERVYRQALLAEPKSVIIATDHDEIADRAIQFGAEVVITSHTHQTGTDRIAEVVAKGSFAPDDVIVNVQGDEPFIRPKLIQQVACSLTKTKAPVSTLCWPISSLEILNNPNVVKVVCTRDNHALYFSRSAIPYHRDNKSAYSNTFRHIGLYAYRAAFLLEFVSWPPCTLEQIECLEQLRILWSGFSIRVDEACEEPLQDINTKEDLILAQQYFLDISNI.

Belongs to the KdsB family.

It is found in the cytoplasm. The enzyme catalyses 3-deoxy-alpha-D-manno-oct-2-ulosonate + CTP = CMP-3-deoxy-beta-D-manno-octulosonate + diphosphate. The protein operates within nucleotide-sugar biosynthesis; CMP-3-deoxy-D-manno-octulosonate biosynthesis; CMP-3-deoxy-D-manno-octulosonate from 3-deoxy-D-manno-octulosonate and CTP: step 1/1. Its pathway is bacterial outer membrane biogenesis; lipopolysaccharide biosynthesis. Its function is as follows. Activates KDO (a required 8-carbon sugar) for incorporation into bacterial lipopolysaccharide in Gram-negative bacteria. This is 3-deoxy-manno-octulosonate cytidylyltransferase from Legionella pneumophila (strain Corby).